We begin with the raw amino-acid sequence, 95 residues long: Co-chaperonin GroES (95 aa).

This sequence belongs to the GroES chaperonin family. In terms of assembly, heptamer of 7 subunits arranged in a ring. Interacts with the chaperonin GroEL.

Its subcellular location is the cytoplasm. Functionally, together with the chaperonin GroEL, plays an essential role in assisting protein folding. The GroEL-GroES system forms a nano-cage that allows encapsulation of the non-native substrate proteins and provides a physical environment optimized to promote and accelerate protein folding. GroES binds to the apical surface of the GroEL ring, thereby capping the opening of the GroEL channel. The polypeptide is Co-chaperonin GroES (Aliivibrio salmonicida (strain LFI1238) (Vibrio salmonicida (strain LFI1238))).